The sequence spans 176 residues: Large ribosomal subunit protein uL6 (176 aa).

It belongs to the universal ribosomal protein uL6 family. As to quaternary structure, part of the 50S ribosomal subunit.

This protein binds to the 23S rRNA, and is important in its secondary structure. It is located near the subunit interface in the base of the L7/L12 stalk, and near the tRNA binding site of the peptidyltransferase center. This Thiobacillus denitrificans (strain ATCC 25259 / T1) protein is Large ribosomal subunit protein uL6.